A 36-amino-acid chain; its full sequence is TVIDVKCTSPKQCLPPCKEIYGRHAGAKCMNGKCKC.

Cystine bridges form between cysteine 7–cysteine 29, cysteine 13–cysteine 34, and cysteine 17–cysteine 36.

It belongs to the short scorpion toxin superfamily. Potassium channel inhibitor family. Alpha-KTx 02 subfamily. As to expression, expressed by the venom gland.

It localises to the secreted. Inhibitor of voltage-gated potassium channels (Kv). This protein is capable of displacing the binding of radio-labeled noxiustoxin (AC P08815) to rat brain synaptosomes with high affinity (about 100 pM). It is also capable of inhibiting transient potassium-currents (resembling I(A)-type currents), in cultured rat cerebellar granule cells. About 50% of the peak currents are reduced by application of a 1.5 uM solution of this toxin. Is lethal to mice (when less than 100 ug are injected). This chain is Potassium channel toxin alpha-KTx 2.7, found in Centruroides limpidus (Mexican scorpion).